The chain runs to 337 residues: Glyceraldehyde-3-phosphate dehydrogenase (337 aa).

NAD(+)-binding positions include 12-13 (RI), D34, and K79. Residues 150-152 (SCT), T181, 210-211 (TG), and R233 contribute to the D-glyceraldehyde 3-phosphate site. Catalysis depends on C151, which acts as the Nucleophile. NAD(+) is bound at residue N315.

It belongs to the glyceraldehyde-3-phosphate dehydrogenase family. As to quaternary structure, homotetramer.

Its subcellular location is the cytoplasm. It catalyses the reaction D-glyceraldehyde 3-phosphate + phosphate + NAD(+) = (2R)-3-phospho-glyceroyl phosphate + NADH + H(+). Its pathway is carbohydrate degradation; glycolysis; pyruvate from D-glyceraldehyde 3-phosphate: step 1/5. This Cochliobolus heterostrophus (Southern corn leaf blight fungus) protein is Glyceraldehyde-3-phosphate dehydrogenase (GPD1).